We begin with the raw amino-acid sequence, 167 residues long: GTP-dependent dephospho-CoA kinase (167 aa).

GTP is bound by residues aspartate 39, valine 41, aspartate 58, lysine 60, and glutamate 117.

The protein belongs to the GTP-dependent DPCK family.

The enzyme catalyses 3'-dephospho-CoA + GTP = GDP + CoA + H(+). Its pathway is cofactor biosynthesis; coenzyme A biosynthesis. Functionally, catalyzes the GTP-dependent phosphorylation of the 3'-hydroxyl group of dephosphocoenzyme A to form coenzyme A (CoA). This chain is GTP-dependent dephospho-CoA kinase, found in Korarchaeum cryptofilum (strain OPF8).